A 345-amino-acid chain; its full sequence is Phosphoribosylformylglycinamidine cyclo-ligase (345 aa).

It belongs to the AIR synthase family.

Its subcellular location is the cytoplasm. The enzyme catalyses 2-formamido-N(1)-(5-O-phospho-beta-D-ribosyl)acetamidine + ATP = 5-amino-1-(5-phospho-beta-D-ribosyl)imidazole + ADP + phosphate + H(+). Its pathway is purine metabolism; IMP biosynthesis via de novo pathway; 5-amino-1-(5-phospho-D-ribosyl)imidazole from N(2)-formyl-N(1)-(5-phospho-D-ribosyl)glycinamide: step 2/2. This chain is Phosphoribosylformylglycinamidine cyclo-ligase, found in Pseudoalteromonas atlantica (strain T6c / ATCC BAA-1087).